Here is a 481-residue protein sequence, read N- to C-terminus: Palmitoyltransferase PFA4 (481 aa).

Residues 1–22 (MTNQDPDDGAYPSSQSDDDGIE) form a disordered region. Residues 1 to 66 (MTNQDPDDGA…APLTGRRRTP (66 aa)) are Cytoplasmic-facing. The chain crosses the membrane as a helical span at residues 67 to 87 (LSWTEVIWVSLTLLLIAVLGY). The Lumenal portion of the chain corresponds to 88 to 108 (SSQLYVMLPYYEKTPSFSPQA). A helical transmembrane segment spans residues 109 to 129 (LAAVLVPFNLGLLAIYYNYWL). The Cytoplasmic portion of the chain corresponds to 130–223 (CVTTDAGSVP…LANCVGHFNH (94 aa)). The DHHC domain occupies 181–231 (RYCKTCSAFKPPRSHHCKTCQRCVLRMDHHCPWLANCVGHFNHAHFIRFLF). C211 serves as the catalytic S-palmitoyl cysteine intermediate. The chain crosses the membrane as a helical span at residues 224–244 (AHFIRFLFYVDVTCLYHLIMI). The Lumenal segment spans residues 245–265 (SCRVLDSFNSYTYWREPCARE). A helical membrane pass occupies residues 266–286 (LVWLVVNYALCIPVILLVGIF). Over 287–481 (SLYHFYCLAV…EVRPHTPWSV (195 aa)) the chain is Cytoplasmic. The tract at residues 370 to 481 (SQYRWPPKDP…EVRPHTPWSV (112 aa)) is disordered. Positions 418-431 (SSPSSSDSHSSLHL) are enriched in low complexity. 2 stretches are compositionally biased toward basic and acidic residues: residues 441–452 (LPHHFDPPHDPD) and 466–475 (RGSEGYEVRP).

Belongs to the DHHC palmitoyltransferase family. PFA4 subfamily.

It localises to the endoplasmic reticulum membrane. It catalyses the reaction L-cysteinyl-[protein] + hexadecanoyl-CoA = S-hexadecanoyl-L-cysteinyl-[protein] + CoA. Mediates the reversible addition of palmitate to target proteins, thereby regulating their membrane association and biological function. The protein is Palmitoyltransferase PFA4 of Mycosarcoma maydis (Corn smut fungus).